Here is a 418-residue protein sequence, read N- to C-terminus: MTIAEQVAQIAHEARQASFVLSRLSTRVKNELLLAMAEALEQQAPHLIAENAKDLEEGKQKGLSSAMLDRLMLDAKRISAMADALREVAALPDPVGEVTKMWKRPNNLMVGKMRIPLGVIGIIFEARPNVTADAAALCLKAGNAVILRGGKEAINSNRAIAAILREAMVSKGVPAGALALIPFTDRQGVLEMLKQEECIDLIIPRGGEGLIRFVTENSRIPVIKHYKGVCHIFVDESADFDMAERIIINAKTQRPGVCNALETLLIHESVAAAFIPRIASILGGMQVELRGDERFRALAPQAKPASEEDWYAEYLELILACRVVDDLDQAIDHINRYGSLHTESIITSDYGRAQRFIREVNSSCVVVNASTRFADGNQLGLGAEIGISTTKLHSFGPMGLEDLTTTKFIVYGDGQVRE.

This sequence belongs to the gamma-glutamyl phosphate reductase family.

It is found in the cytoplasm. It carries out the reaction L-glutamate 5-semialdehyde + phosphate + NADP(+) = L-glutamyl 5-phosphate + NADPH + H(+). It participates in amino-acid biosynthesis; L-proline biosynthesis; L-glutamate 5-semialdehyde from L-glutamate: step 2/2. Catalyzes the NADPH-dependent reduction of L-glutamate 5-phosphate into L-glutamate 5-semialdehyde and phosphate. The product spontaneously undergoes cyclization to form 1-pyrroline-5-carboxylate. This is Gamma-glutamyl phosphate reductase from Pelobacter propionicus (strain DSM 2379 / NBRC 103807 / OttBd1).